A 160-amino-acid polypeptide reads, in one-letter code: Putative UPF0479 protein YBL113W-A (160 aa).

The next 2 helical transmembrane spans lie at 39-59 (IVFCLPFFPALFFVPVQKVLQ) and 136-156 (VPMIWLDVFQVFFVFLIISQH).

This sequence belongs to the UPF0479 family.

The protein resides in the membrane. This Saccharomyces cerevisiae (strain ATCC 204508 / S288c) (Baker's yeast) protein is Putative UPF0479 protein YBL113W-A.